A 1649-amino-acid polypeptide reads, in one-letter code: MATDGASCEPDLSRAPEDAAGAAAEAAKKEFDVDTLSKSELRMLLSVMEGELEARDLVIEALRARRKEVFIQERYGRFNLNDPFLALQRDYEAGAGDKEKKPVCTNPLSILEAVMAHCRKMQERMSAQLAAAESRQKKLEMEKLQLQALEQEHKKLATRLEEERGKNKQVVLMLVKECKQLSGKVIEEAQKLEDVMAKLEEEKKKTNELEEELCAEKRRSTEMEAQMEKQLSEFDTEREQLRAKLNREEAHTTDLKEEIDKMKKMIEQLKRGSDSKPSLSLPRKTKDRRLVSISVGTEGTVTRSVACQTDLVTESADHVKKLPLTMPVKPSTGSPLASANAKGSVCTSAAMARPGIDRQASHGDLIGVSVPAFPPSSASRIEENGPSTGSTPDPTSSTPPLPSNAAPPTAQTPGITPQNSQAPPMHSLHSPCANASLHPGLNPRIQAARFRFQGNANDPDQNGNTTQSPPSRDVSPTSRDNLVAKQLARNTVTQALSRFTGPQAGAPPRPGAPPAGDVGTHPSVGRTSVKTHGVARVDRGNPPPIPPKKPGLSQTPSPPHPQLKVIIDSSRASNTGAKGDNKTVASPPSSLPQGNRVINEENLPKSSSPQLPPKPSIDLTVAPAGCAVSALATSQVGAWPAATPGLNQPACSDSSLVIPTTIAFCSSINPVSASSCRPGASDSLLVTASGWSPSLTPLLMSGGPAPLAGRPTLLQQAAAQGNVTLLSMLLNEEGLDINYSCEDGHSALYSAAKNGHTDCVRLLLSAEAQVNAADKNGFTPLCAAAAQGHFKCVELLIAYDANINHAADGGQTPLYLACKNGNKECIKLLLEAGTDRSVKTTDGWTPVHAAVDTGNVDSLKLLMYHRVPAHGNSFSEEESESGVFDLDGGEESPEGKSKPVVTADLINHANREGWTAAHIAASKGFKNCLEILCRHGGLETERRDKCNRTVHDVATDDCKHLLENLNALKIPLRISVGEIEPSNYGSDDFECENTICALNIRKQTSWDDFSKAVSQALTNHFQAISSDGWWSLEDVTCNNTTDSNIGLSARSIRSITLGNVPWSVGQSFAQSPWDFMMKNKAEHITVLLSGPQEGCLSSVTYASMIPLQMMQNYLRLVEQYHNVIFHGPEGSLQDYIVHQLALCLKHRQMAAGFSCEIVRAEVDAGFSKKQLLDLFISSACLIPVKQSPVKKKIIIILENLEKSSLSELLRDFLAPLENRSTESPCTFQKGNGMSECYYFHENCFLMGTIAKACLQGSDLLVQQHFRWVQLRWDAEPMQGLLQRFLRRKVVNKFRGQVPPPCDPVCKTVDWALSVWRQLNSCLARLGTPEALLGPKYFLSCPVVPGHAQVTVKWMSKLWNGVITPRVQEAILSRASVKRQPGFGQTTAKRHPSQGQQAVVKAALSILLNKAVLHGCPLPRAELEQHTADFKGGSFPLSIVSSYNSCSKKKGESGAWRRVNTSPRRKSSRFSLPTWNKPDLSNEGIKNKTLSQLNCNRNASLSKQKSLENDVSLTLNLDQRLSLGSDDEADLVKELQSMCSSKSESDISKIADSRDDLRMFDSSGNHPVFSATINNLRMPVSQKEVCPLSSHQTTECSNSKSKTELGVSRVKSFLPVPRSKVTQCSQNTKRSSSSSNTRQIEINNNSKEEN.

Residues 1–23 are disordered; that stretch reads MATDGASCEPDLSRAPEDAAGAA. The stretch at 119–276 forms a coiled coil; that stretch reads RKMQERMSAQ…EQLKRGSDSK (158 aa). Disordered stretches follow at residues 366–440 and 454–478; these read IGVS…LHPG and GNAN…SPTS. 2 stretches are compositionally biased toward low complexity: residues 368–379 and 386–396; these read VSVPAFPPSSAS and PSTGSTPDPTS. The segment covering 411-422 has biased composition (polar residues); sequence QTPGITPQNSQA. Position 498 is an asymmetric dimethylarginine (arginine 498). Residues 499–616 are disordered; the sequence is FTGPQAGAPP…SSPQLPPKPS (118 aa). Over residues 583–593 the composition is skewed to polar residues; it reads TVASPPSSLPQ. ANK repeat units lie at residues 709 to 739, 743 to 772, 776 to 805, 809 to 838, and 842 to 871; these read GRPT…DINY, DGHS…QVNA, NGFT…NINH, GGQT…DRSV, and DGWT…PAHG. Positions 872-897 are disordered; the sequence is NSFSEEESESGVFDLDGGEESPEGKS. The stretch at 912-942 is one ANK 6 repeat; sequence EGWTAAHIAASKGFKNCLEILCRHGGLETER. The interval 1444–1482 is disordered; sequence SCSKKKGESGAWRRVNTSPRRKSSRFSLPTWNKPDLSNE. Position 1524 is a phosphoserine (serine 1524). Positions 1616-1649 are disordered; it reads PRSKVTQCSQNTKRSSSSSNTRQIEINNNSKEEN. The span at 1624-1638 shows a compositional bias: low complexity; that stretch reads SQNTKRSSSSSNTRQ. Residues 1639-1649 are compositionally biased toward polar residues; it reads IEINNNSKEEN.

Interacts with CTTN/cortactin SH3 domain. Interacts with STRN, STRN4/zinedin and MOB4/phocein; this interactions mediate the association with the STRIPAK core complex and may regulate dendritic spine distribution of the STRIPAK complex in hippocampal neurons. Activation of glutamate receptors weakens the interaction with STRN and STRN4.

It is found in the cytoplasm. It localises to the cell cortex. Its subcellular location is the cell projection. The protein localises to the dendritic spine. In terms of biological role, regulates the dendritic spine distribution of CTTN/cortactin in hippocampal neurons, and thus controls dendritic spinogenesis and dendritic spine maintenance. Associates with the striatin-interacting phosphatase and kinase (STRIPAK) core complex to regulate dendritic spine distribution of the STRIPAK complex in hippocampal neurons. In Aotus nancymaae (Ma's night monkey), this protein is Cortactin-binding protein 2 (CTTNBP2).